The following is a 497-amino-acid chain: Anthranilate synthase component 1 (497 aa).

Residues Ser49 and 271-273 (PYL) each bind L-tryptophan. Residue 312–313 (GT) participates in chorismate binding. Glu339 is a binding site for Mg(2+). Residues Arg447, 461–463 (GAG), and Gly463 contribute to the chorismate site. Mg(2+) is bound at residue Glu476.

It belongs to the anthranilate synthase component I family. As to quaternary structure, heterotetramer consisting of two non-identical subunits: a beta subunit (TrpG) and a large alpha subunit (TrpE). Mg(2+) is required as a cofactor.

The enzyme catalyses chorismate + L-glutamine = anthranilate + pyruvate + L-glutamate + H(+). Its pathway is amino-acid biosynthesis; L-tryptophan biosynthesis; L-tryptophan from chorismate: step 1/5. Its activity is regulated as follows. Feedback inhibited by tryptophan. In terms of biological role, part of a heterotetrameric complex that catalyzes the two-step biosynthesis of anthranilate, an intermediate in the biosynthesis of L-tryptophan. In the first step, the glutamine-binding beta subunit (TrpG) of anthranilate synthase (AS) provides the glutamine amidotransferase activity which generates ammonia as a substrate that, along with chorismate, is used in the second step, catalyzed by the large alpha subunit of AS (TrpE) to produce anthranilate. In the absence of TrpG, TrpE can synthesize anthranilate directly from chorismate and high concentrations of ammonia. This is Anthranilate synthase component 1 (trpE) from Acinetobacter calcoaceticus.